The chain runs to 189 residues: MTKLIVGLGNPGSKYHETKHNVGFMALDRIVKPLNVQFTENKTFKAETVATFINGEKIYFIKPTTFMNASGLAVRAFLAYYNLTVEDLIVIYDDLDMEVGKIRFRQKGSAGGHNGIKSIIKEIGTQEFDRIKIGIGRPKDKMTVVNYVLGKFDKKDEITIFNTLDKVDKAVNYYLQTKNFEQTMQKFNG.

Tyr-15 is a tRNA binding site. His-20 (proton acceptor) is an active-site residue. Residues Phe-66, Asn-68, and Asn-114 each coordinate tRNA.

Belongs to the PTH family. As to quaternary structure, monomer.

The protein localises to the cytoplasm. The catalysed reaction is an N-acyl-L-alpha-aminoacyl-tRNA + H2O = an N-acyl-L-amino acid + a tRNA + H(+). In terms of biological role, hydrolyzes ribosome-free peptidyl-tRNAs (with 1 or more amino acids incorporated), which drop off the ribosome during protein synthesis, or as a result of ribosome stalling. Functionally, catalyzes the release of premature peptidyl moieties from peptidyl-tRNA molecules trapped in stalled 50S ribosomal subunits, and thus maintains levels of free tRNAs and 50S ribosomes. This Streptococcus mutans serotype c (strain ATCC 700610 / UA159) protein is Peptidyl-tRNA hydrolase.